The chain runs to 605 residues: Podocalyxin-like protein 2 (605 aa).

The first 32 residues, 1–32 (MGRLLRAARLPPLLSPLLLLLVGGAFLGACVA), serve as a signal peptide directing secretion. Residues 33 to 500 (GSDEPGPEGL…ASQVRSDYGT (468 aa)) are Extracellular-facing. Serine 79 carries O-linked (Xyl...) (chondroitin sulfate) serine glycosylation. Sulfotyrosine occurs at positions 97 and 118. An O-glycosylated at one site region spans residues 129–134 (SIEDTS). The interval 129–347 (SIEDTSQAQE…PGDMELTPSS (219 aa)) is disordered. Serine 144 is a glycosylation site (O-linked (GalNAc...) serine). Positions 162–189 (EEEEEEEEEEEREKEEVEKQEEEEEEEL) are enriched in acidic residues. Residue asparagine 193 is glycosylated (N-linked (GlcNAc...) asparagine). Polar residues predominate over residues 207 to 217 (SLTSSSQTPGA). 2 stretches are compositionally biased toward low complexity: residues 241-255 (PSLLLPSVTPTTVTP) and 288-298 (EATAGAAGLSG). Residue asparagine 395 is glycosylated (N-linked (GlcNAc...) asparagine). A helical transmembrane segment spans residues 501-521 (LFVVLVVIGAICIIIIALGLL). The Cytoplasmic segment spans residues 522–605 (YNCWQRRLPK…SDVFEEDTHL (84 aa)). Positions 554–605 (LDVASDSQSEMQEKHPSLNGGGALNGPGSWGALMGGKRDPEDSDVFEEDTHL) are disordered. The residue at position 570 (serine 570) is a Phosphoserine. Positions 572–582 (NGGGALNGPGS) are enriched in gly residues. Over residues 594–605 (EDSDVFEEDTHL) the composition is skewed to acidic residues. The residue at position 596 (serine 596) is a Phosphoserine.

It belongs to the podocalyxin family. As to quaternary structure, homodimer; disulfide-linked. Interacts with SELL, SELE and SELP. O-glycosylated; contains chondroitin sulfate. Displays sialylated O-linked oligosaccharides. In terms of processing, sulfation is necessary for interaction with SELL. Sialylated O-linked oligosaccharides are necessary for interaction with SELL, SELE and SELP. Expressed in T-cells, B-cells and monocytes. Expression is higher on memory and germinal center cells than on naive B-cells (at protein level). Highly expressed in brain. Moderately expressed in pancreas, kidney and lymphoid node. Weakly expressed in liver. Detected in both endothelial cells and CD34+ bone marrow cells.

The protein resides in the membrane. Acts as a ligand for vascular selectins. Mediates rapid rolling of leukocytes over vascular surfaces through high affinity divalent cation-dependent interactions with E-, P- and L-selectins. This Homo sapiens (Human) protein is Podocalyxin-like protein 2 (PODXL2).